Consider the following 800-residue polypeptide: Mitochondrial intermediate peptidase (800 aa).

A mitochondrion-targeting transit peptide spans 1-23 (MAGHMLMPLRRRPWTCRACLQRL). Polar residues predominate over residues 27–41 (RRSLETAASPSSQSD). The disordered stretch occupies residues 27 to 59 (RRSLETAASPSSQSDVYDYAPTNHSTQKKSNDE). His-563 lines the Zn(2+) pocket. Glu-564 is a catalytic residue. Residues His-567 and His-570 each coordinate Zn(2+).

Belongs to the peptidase M3 family. It depends on Zn(2+) as a cofactor.

The protein resides in the mitochondrion matrix. The enzyme catalyses Release of an N-terminal octapeptide as second stage of processing of some proteins imported into the mitochondrion.. Its function is as follows. Cleaves proteins, imported into the mitochondrion, to their mature size. While most mitochondrial precursor proteins are processed to the mature form in one step by mitochondrial processing peptidase (MPP), the sequential cleavage by MIP of an octapeptide after initial processing by MPP is a required step for a subgroup of nuclear-encoded precursor proteins destined for the matrix or the inner membrane. The sequence is that of Mitochondrial intermediate peptidase (oct1) from Aspergillus oryzae (strain ATCC 42149 / RIB 40) (Yellow koji mold).